A 175-amino-acid chain; its full sequence is Large ribosomal subunit protein uL18 (175 aa).

Belongs to the universal ribosomal protein uL18 family. Part of the 50S ribosomal subunit. Contacts the 5S and 23S rRNAs.

Its function is as follows. This is one of the proteins that bind and probably mediate the attachment of the 5S RNA into the large ribosomal subunit, where it forms part of the central protuberance. The protein is Large ribosomal subunit protein uL18 of Methanoculleus marisnigri (strain ATCC 35101 / DSM 1498 / JR1).